The chain runs to 330 residues: Ribose operon repressor (330 aa).

Residues 2–56 (ATMKDVARLAGVSTSTVSHVINKDRFVSEAITAKVEAAIKELNYAPSALARSLKL) form the HTH lacI-type domain. The H-T-H motif DNA-binding region spans 4-23 (MKDVARLAGVSTSTVSHVIN).

In terms of biological role, transcriptional repressor for the ribose rbsDACBK operon. RbsR binds to a region of perfect dyad symmetry spanning the rbs operon transcriptional start site. The affinity for the rbs operator is reduced by addition of ribose, consistent with ribose being the inducer of the operon. The sequence is that of Ribose operon repressor (rbsR) from Escherichia coli O6:H1 (strain CFT073 / ATCC 700928 / UPEC).